A 265-amino-acid polypeptide reads, in one-letter code: Thiazole synthase (265 aa).

Lys106 serves as the catalytic Schiff-base intermediate with DXP. Residues Gly167, 193 to 194 (AG), and 215 to 216 (NS) each bind 1-deoxy-D-xylulose 5-phosphate.

The protein belongs to the ThiG family. As to quaternary structure, homotetramer. Forms heterodimers with either ThiH or ThiS.

It is found in the cytoplasm. It catalyses the reaction [ThiS sulfur-carrier protein]-C-terminal-Gly-aminoethanethioate + 2-iminoacetate + 1-deoxy-D-xylulose 5-phosphate = [ThiS sulfur-carrier protein]-C-terminal Gly-Gly + 2-[(2R,5Z)-2-carboxy-4-methylthiazol-5(2H)-ylidene]ethyl phosphate + 2 H2O + H(+). It functions in the pathway cofactor biosynthesis; thiamine diphosphate biosynthesis. In terms of biological role, catalyzes the rearrangement of 1-deoxy-D-xylulose 5-phosphate (DXP) to produce the thiazole phosphate moiety of thiamine. Sulfur is provided by the thiocarboxylate moiety of the carrier protein ThiS. In vitro, sulfur can be provided by H(2)S. This chain is Thiazole synthase, found in Prochlorococcus marinus subsp. pastoris (strain CCMP1986 / NIES-2087 / MED4).